A 33-amino-acid chain; its full sequence is Dermaseptin DS VIII-like peptide (33 aa).

Ala-33 bears the Alanine amide mark.

As to expression, expressed by the parotoid glands.

The protein localises to the secreted. In terms of biological role, possesses a potent antimicrobial activity against bacteria, fungi and protozoa. Probably acts by disturbing membrane functions with its amphipathic structure. The polypeptide is Dermaseptin DS VIII-like peptide (Phyllomedusa burmeisteri (Brazilian common walking leaf frog)).